The sequence spans 191 residues: Putative glutathione-dependent formaldehyde-activating enzyme (191 aa).

A CENP-V/GFA domain is found at 20-166 (FPGGNLYCKC…FHSLGLETYD (147 aa)). Zn(2+)-binding residues include cysteine 27, cysteine 29, cysteine 48, cysteine 50, cysteine 53, cysteine 95, and cysteine 98.

Belongs to the Gfa family. Requires Zn(2+) as cofactor.

The catalysed reaction is S-(hydroxymethyl)glutathione = glutathione + formaldehyde. The protein operates within one-carbon metabolism; formaldehyde degradation; formate from formaldehyde (glutathione route): step 1/3. Its function is as follows. Catalyzes the condensation of formaldehyde and glutathione to S-hydroxymethylglutathione. The chain is Putative glutathione-dependent formaldehyde-activating enzyme from Aspergillus niger (strain ATCC MYA-4892 / CBS 513.88 / FGSC A1513).